We begin with the raw amino-acid sequence, 239 residues long: Octanoyltransferase (239 aa).

Residues 48 to 236 enclose the BPL/LPL catalytic domain; the sequence is EGGDELVWLV…AFETVFGETT (189 aa). Substrate is bound by residues 87–94, 167–169, and 180–182; these read RGGEYTYH, ALG, and GLS. The active-site Acyl-thioester intermediate is the Cys-198.

This sequence belongs to the LipB family.

The protein resides in the cytoplasm. The enzyme catalyses octanoyl-[ACP] + L-lysyl-[protein] = N(6)-octanoyl-L-lysyl-[protein] + holo-[ACP] + H(+). It participates in protein modification; protein lipoylation via endogenous pathway; protein N(6)-(lipoyl)lysine from octanoyl-[acyl-carrier-protein]: step 1/2. Functionally, catalyzes the transfer of endogenously produced octanoic acid from octanoyl-acyl-carrier-protein onto the lipoyl domains of lipoate-dependent enzymes. Lipoyl-ACP can also act as a substrate although octanoyl-ACP is likely to be the physiological substrate. This is Octanoyltransferase from Rhizobium etli (strain ATCC 51251 / DSM 11541 / JCM 21823 / NBRC 15573 / CFN 42).